Here is a 351-residue protein sequence, read N- to C-terminus: Protein IQ-DOMAIN 27 (351 aa).

Residues 15 to 37 (KKSKDRSHVSGGDSVKGGDHSGD) are disordered. Residues 98-114 (EERWAAVKIQKVFRGSL) are calmodulin-binding. IQ domains follow at residues 99–127 (ERWA…GIVK) and 128–150 (LQAL…SIQT). A Nuclear localization signal motif is present at residues 191–198 (DRRTKIVE). Residues 299 to 310 (SFKAKVRSHSAP) show a composition bias toward basic residues. Residues 299–351 (SFKAKVRSHSAPRQRSERQRLSLDEVMASKSSVSGVSMSHQHPPRHSCSCDPL) form a disordered region. The span at 312–321 (QRSERQRLSL) shows a compositional bias: basic and acidic residues. Over residues 324–337 (VMASKSSVSGVSMS) the composition is skewed to low complexity.

This sequence belongs to the IQD family. In terms of assembly, binds to multiple calmodulin (CaM) in the presence of Ca(2+) and CaM-like proteins.

The protein localises to the nucleus. Its subcellular location is the nucleus envelope. It is found in the cytoplasm. The protein resides in the cytoskeleton. Functionally, may be involved in cooperative interactions with calmodulins or calmodulin-like proteins. Recruits calmodulin proteins to microtubules, thus being a potential scaffold in cellular signaling and trafficking. May associate with nucleic acids and regulate gene expression at the transcriptional or post-transcriptional level. The sequence is that of Protein IQ-DOMAIN 27 from Arabidopsis thaliana (Mouse-ear cress).